Reading from the N-terminus, the 443-residue chain is uncharacterized protein (443 aa).

This is an uncharacterized protein from Mycoplasma genitalium (strain ATCC 33530 / DSM 19775 / NCTC 10195 / G37) (Mycoplasmoides genitalium).